The following is a 456-amino-acid chain: 26S proteasome non-ATPase regulatory subunit 12 (456 aa).

Alanine 2 bears the N-acetylalanine mark. Lysine 92 is covalently cross-linked (Glycyl lysine isopeptide (Lys-Gly) (interchain with G-Cter in SUMO1); alternate). Residue lysine 92 forms a Glycyl lysine isopeptide (Lys-Gly) (interchain with G-Cter in SUMO2); alternate linkage. An N6-acetyllysine mark is found at lysine 221 and lysine 368. The PCI domain occupies 242–420 (SICKHYRAIY…GIINFQRPKD (179 aa)).

Belongs to the proteasome subunit p55 family. In terms of assembly, component of the 19S proteasome regulatory particle complex. The 26S proteasome consists of a 20S core particle (CP) and two 19S regulatory subunits (RP). The regulatory particle is made of a lid composed of 9 subunits including PSMD12, a base containing 6 ATPases and few additional components. Interacts with ERCC6.

Functionally, component of the 26S proteasome, a multiprotein complex involved in the ATP-dependent degradation of ubiquitinated proteins. This complex plays a key role in the maintenance of protein homeostasis by removing misfolded or damaged proteins, which could impair cellular functions, and by removing proteins whose functions are no longer required. Therefore, the proteasome participates in numerous cellular processes, including cell cycle progression, apoptosis, or DNA damage repair. The polypeptide is 26S proteasome non-ATPase regulatory subunit 12 (PSMD12) (Homo sapiens (Human)).